Reading from the N-terminus, the 173-residue chain is NADH-ubiquinone oxidoreductase chain 6 (173 aa).

Transmembrane regions (helical) follow at residues 1 to 21, 24 to 44, 53 to 73, 87 to 107, and 141 to 161; these read MTYL…AVAS, APYF…GVLV, LVLF…SAAL, VLGY…LFWG, and GGML…VLEL.

It belongs to the complex I subunit 6 family.

The protein localises to the mitochondrion membrane. The catalysed reaction is a ubiquinone + NADH + 5 H(+)(in) = a ubiquinol + NAD(+) + 4 H(+)(out). Functionally, core subunit of the mitochondrial membrane respiratory chain NADH dehydrogenase (Complex I) that is believed to belong to the minimal assembly required for catalysis. Complex I functions in the transfer of electrons from NADH to the respiratory chain. The immediate electron acceptor for the enzyme is believed to be ubiquinone. The protein is NADH-ubiquinone oxidoreductase chain 6 (MT-ND6) of Oncorhynchus mykiss (Rainbow trout).